Reading from the N-terminus, the 163-residue chain is Cytosolic iron-sulfur assembly component 2B (163 aa).

This sequence belongs to the MIP18 family. As to quaternary structure, component of the CIA complex. Component of the MMXD complex, which includes CIAO1, ERCC2, CIAO2B, MMS19 and SLC25A5. Interacts with CIAO1, ERCC2 and MMS19; the interactions are direct. Interacts with KIF4A; the interaction facilitates the transfer of Fe-S clusters to KIF4A to ensure proper localization of KIF4A to the mitotic machinery. Interacts with CCDC117; the interaction is direct.

Its subcellular location is the nucleus. The protein localises to the cytoplasm. The protein resides in the cytoskeleton. It localises to the spindle. Component of the cytosolic iron-sulfur protein assembly (CIA) complex, a multiprotein complex that mediates the incorporation of iron-sulfur cluster into extramitochondrial Fe/S proteins. As a CIA complex component and in collaboration with CIAO1 and MMS19, binds to and facilitates the assembly of most cytosolic-nuclear Fe/S proteins. As part of the mitotic spindle-associated MMXD complex it plays a role in chromosome segregation, probably by facilitating iron-sulfur cluster assembly into ERCC2/XPD. Together with MMS19, facilitates the transfer of Fe-S clusters to the motor protein KIF4A, which ensures proper localization of KIF4A to mitotic machinery components to promote the progression of mitosis. This Mus musculus (Mouse) protein is Cytosolic iron-sulfur assembly component 2B.